The primary structure comprises 196 residues: Late protein I196L (196 aa).

2 repeat units span residues 28–48 (SNYLTTAIANNTSISPTTSSN) and 49–68 (HITTAIPNNTSILPTTSSNH). The stretch at 69-87 (ITTAISNNITDKDDYTHFS) is one 3; approximate repeat.

Belongs to the asfivirus I196L family.

In Ornithodoros (relapsing fever ticks), this protein is Late protein I196L.